A 398-amino-acid polypeptide reads, in one-letter code: Probable sugar efflux transporter (398 aa).

A run of 12 helical transmembrane segments spans residues 15–35, 50–70, 81–101, 103–123, 136–156, 169–189, 209–229, 246–266, 275–295, 301–321, 333–353, and 364–384; these read VVTL…PVGL, VGIM…PFML, LIGL…AWNF, VLVI…SITA, AQAL…GLPI, TFFA…KLLP, PALM…YTAY, FATV…VLFG, LLVS…MPAA, LAIL…GMQV, VAMS…ALVG, and AIGY…ILIF.

This sequence belongs to the major facilitator superfamily. SotB (TC 2.A.1.2) family.

It is found in the cell inner membrane. In terms of biological role, involved in the efflux of sugars. The physiological role may be the reduction of the intracellular concentration of toxic sugars or sugar metabolites. This chain is Probable sugar efflux transporter, found in Enterobacter sp. (strain 638).